Here is a 111-residue protein sequence, read N- to C-terminus: BET1-like protein (111 aa).

Topologically, residues 1–86 (MADWARAQSP…MARSGQDNRK (86 aa)) are cytoplasmic. Ser9 and Ser37 each carry phosphoserine. The 63-residue stretch at 15–77 (EILDRENKRM…TGSVKRFSTM (63 aa)) folds into the t-SNARE coiled-coil homology domain. Residues 87–107 (LLCGMAVGLIVAFFILSYFLS) traverse the membrane as a helical; Anchor for type IV membrane protein segment. Residues 108-111 (RART) lie on the Lumenal side of the membrane.

As to quaternary structure, component of a SNARE complex consisting of STX5, YKT6, GOSR1 and BET1L. Interacts with STX5.

The protein localises to the golgi apparatus membrane. Its subcellular location is the golgi apparatus. The protein resides in the trans-Golgi network membrane. Functionally, vesicle SNARE required for targeting and fusion of retrograde transport vesicles with the Golgi complex. Required for the integrity of the Golgi complex. In Homo sapiens (Human), this protein is BET1-like protein.